Consider the following 45-residue polypeptide: Small, acid-soluble spore protein P (45 aa).

The span at methionine 1 to lysine 12 shows a compositional bias: basic and acidic residues. Residues methionine 1 to glycine 45 are disordered.

The protein belongs to the SspP family.

It localises to the spore core. The chain is Small, acid-soluble spore protein P from Halalkalibacterium halodurans (strain ATCC BAA-125 / DSM 18197 / FERM 7344 / JCM 9153 / C-125) (Bacillus halodurans).